The chain runs to 147 residues: D-aminoacyl-tRNA deacylase (147 aa).

The Gly-cisPro motif, important for rejection of L-amino acids signature appears at 136–137; the sequence is GP.

Belongs to the DTD family. Homodimer.

It localises to the cytoplasm. The catalysed reaction is glycyl-tRNA(Ala) + H2O = tRNA(Ala) + glycine + H(+). The enzyme catalyses a D-aminoacyl-tRNA + H2O = a tRNA + a D-alpha-amino acid + H(+). Functionally, an aminoacyl-tRNA editing enzyme that deacylates mischarged D-aminoacyl-tRNAs. Also deacylates mischarged glycyl-tRNA(Ala), protecting cells against glycine mischarging by AlaRS. Acts via tRNA-based rather than protein-based catalysis; rejects L-amino acids rather than detecting D-amino acids in the active site. By recycling D-aminoacyl-tRNA to D-amino acids and free tRNA molecules, this enzyme counteracts the toxicity associated with the formation of D-aminoacyl-tRNA entities in vivo and helps enforce protein L-homochirality. This Streptococcus pneumoniae (strain P1031) protein is D-aminoacyl-tRNA deacylase.